The chain runs to 165 residues: Protein NKG7 (165 aa).

Helical transmembrane passes span L9–F29, F61–F81, L92–Y112, and F133–A153.

It belongs to the PMP-22/EMP/MP20 family. In terms of tissue distribution, expressed in activated T-cells, in kidney, liver, lung and pancreas. Not expressed in brain, heart, or skeletal muscle. Expressed at high levels in TCR gamma delta-expressing CTL clones, and in some TCR alpha beta-expressing CTL clones (both CD4+ and CD8+), but is not expressed in other TCR alpha beta-expressing CTL clones and in cell lines representing B-cells, monocytes, and myeloid cells.

It is found in the cell membrane. The protein localises to the cytolytic granule membrane. Functionally, regulates cytotoxic granule exocytosis in effector lymphocytes, thus acting as a critical mediator of inflammation in a broad range of infectious and non-infectious diseases. Essential for cytotoxic degranulation of natural killer (NK) cells and CD8(+) T-cells and for the activation of CD4(+) T-cells following infection. Plays a critical role in CD8(+) T-cell and NK cell-mediated cytolysis of target cells and contributes to the cytolytic activity via the perforin/granzyme pathway by enhancing exocytosis of LAMP1-carrying lytic granules. Contributes to NK cell-mediated control of cancer metastasis. This is Protein NKG7 (NKG7) from Homo sapiens (Human).